Reading from the N-terminus, the 179-residue chain is ATP synthase subunit delta (179 aa).

It belongs to the ATPase delta chain family. As to quaternary structure, F-type ATPases have 2 components, F(1) - the catalytic core - and F(0) - the membrane proton channel. F(1) has five subunits: alpha(3), beta(3), gamma(1), delta(1), epsilon(1). F(0) has three main subunits: a(1), b(2) and c(10-14). The alpha and beta chains form an alternating ring which encloses part of the gamma chain. F(1) is attached to F(0) by a central stalk formed by the gamma and epsilon chains, while a peripheral stalk is formed by the delta and b chains.

The protein resides in the cell inner membrane. F(1)F(0) ATP synthase produces ATP from ADP in the presence of a proton or sodium gradient. F-type ATPases consist of two structural domains, F(1) containing the extramembraneous catalytic core and F(0) containing the membrane proton channel, linked together by a central stalk and a peripheral stalk. During catalysis, ATP synthesis in the catalytic domain of F(1) is coupled via a rotary mechanism of the central stalk subunits to proton translocation. In terms of biological role, this protein is part of the stalk that links CF(0) to CF(1). It either transmits conformational changes from CF(0) to CF(1) or is implicated in proton conduction. This Paraburkholderia xenovorans (strain LB400) protein is ATP synthase subunit delta.